We begin with the raw amino-acid sequence, 325 residues long: Prenytransferase adrG (325 aa).

7 helical membrane-spanning segments follow: residues Leu47 to Leu67, Met71 to Ile91, Ala117 to Trp137, Pro163 to Leu183, Met189 to Ile209, Leu236 to Thr256, and Leu258 to Leu278.

This sequence belongs to the UbiA prenyltransferase family. It depends on Mg(2+) as a cofactor.

The protein resides in the membrane. The catalysed reaction is 3,5-dimethylorsellinate + (2E,6E)-farnesyl diphosphate = (3R)-3-farnesyl-6-hydroxy-2,3,5-trimethyl-4-oxocyclohexa-1,5-diene-1-carboxylate + diphosphate + H(+). Its pathway is secondary metabolite biosynthesis; terpenoid biosynthesis. Functionally, prenytransferase; part of the gene cluster that mediates the biosynthesis of andrastins, meroterpenoid compounds that exhibit inhibitory activity against ras farnesyltransferase, suggesting that they could be promising leads for antitumor agents. The first step of the pathway is the synthesis of 3,5-dimethylorsellinic acid (DMOA) by the polyketide synthase adrD via condensation of one acetyl-CoA starter unit with 3 malonyl-CoA units and 2 methylations. DMAO is then converted to farnesyl-DMAO by the prenyltransferase adrG. The methyltransferase adrK catalyzes the methylation of the carboxyl group of farnesyl-DMAO to farnesyl-DMAO methyl ester which is further converted to epoxyfarnesyl-DMAO methyl ester by the FAD-dependent monooxygenase adrH. The terpene cyclase adrI then catalyzes the carbon skeletal rearrangement to generate the andrastin E, the first compound in the pathway having the andrastin scaffold, with the tetracyclic ring system. The post-cyclization tailoring enzymes adrF, adrE, adrJ, and adrA, are involved in the conversion of andrastin E into andrastin A. The short chain dehydrogenase adrF is responsible for the oxidation of the C-3 a hydroxyl group of andrastin E to yield the corresponding ketone, andrastin D. The ketoreductase adrE stereoselectively reduces the carbonyl moiety to reverse the stereochemistry of the C-3 position to yield andrastin F. The acetyltransferase adrJ is the acetyltransferase that attaches the acetyl group to the C-3 hydroxyl group of andrastin F to yield andrastin C. Finally, the cytochrome P450 monooxygenase adrA catalyzes two sequential oxidation reactions of the C-23 methyl group, to generate the corresponding alcohol andrastin B, and aldehyde andrastin A. The sequence is that of Prenytransferase adrG from Penicillium rubens (strain ATCC 28089 / DSM 1075 / NRRL 1951 / Wisconsin 54-1255) (Penicillium chrysogenum).